The chain runs to 423 residues: UBX domain-containing protein 1 (423 aa).

The interval 44-167 (QTDDQKDRRE…EVTDPSDPNS (124 aa)) is disordered. Positions 46–66 (DDQKDRREEAHWNRQQEKALK) are enriched in basic and acidic residues. Residues 69–79 (AFSTNSSNKAI) show a composition bias toward polar residues. Residues 115–130 (SSRSGSGNNSRFMSFS) are compositionally biased toward low complexity. Residues S128, S210, and S224 each carry the phosphoserine modification. The 66-residue stretch at 232–297 (KVTREITFWK…VYKKLDESYK (66 aa)) folds into the SEP domain. A Glycyl lysine isopeptide (Lys-Gly) (interchain with G-Cter in ubiquitin) cross-link involves residue K241. The segment at 299–348 (PTRKLGGFSGQGQRLGSPIPGESSPAEVPKNETPAAQEQPMPDNEPKQGD) is disordered. 3 positions are modified to phosphoserine: S315, S321, and S322. Position 331 is a phosphothreonine (T331). Residues 344-421 (PKQGDTSIQI…DLLNSVVVQR (78 aa)) enclose the UBX domain.

Forms a complex composed of CDC48, NPL4, UFD1, DOA1, SHP1 and deubiquitinase OTU1. Interacts with CDC48.

The protein localises to the nucleus. The protein resides in the cytoplasm. Functionally, involved in CDC48-dependent protein degradation through the ubiquitin/proteasome pathway. Direct or indirect positive regulator of GLC7 activity. This Saccharomyces cerevisiae (strain ATCC 204508 / S288c) (Baker's yeast) protein is UBX domain-containing protein 1 (SHP1).